A 220-amino-acid chain; its full sequence is Ribonuclease HII (220 aa).

The 219-residue stretch at 1–219 (MMIAGIDEAG…VENIREELKK (219 aa)) folds into the RNase H type-2 domain. Residues aspartate 7, glutamate 8, and aspartate 105 each contribute to the a divalent metal cation site.

This sequence belongs to the RNase HII family. Mn(2+) is required as a cofactor. Mg(2+) serves as cofactor.

The protein localises to the cytoplasm. The catalysed reaction is Endonucleolytic cleavage to 5'-phosphomonoester.. Its function is as follows. Endonuclease that specifically degrades the RNA of RNA-DNA hybrids. The polypeptide is Ribonuclease HII (Methanosarcina mazei (strain ATCC BAA-159 / DSM 3647 / Goe1 / Go1 / JCM 11833 / OCM 88) (Methanosarcina frisia)).